The chain runs to 1159 residues: WASH complex subunit 5 (1159 aa).

It belongs to the strumpellin family. Component of the WASH core complex also described as WASH regulatory complex (SHRC) composed of WASH (WASHC1, WASH2P or WASH3P), WASHC2 (WASHC2A or WASHC2C), WASHC3, WASHC4 and WASHC5. The WASH core complex associates via WASHC2 with the F-actin-capping protein dimer (formed by CAPZA1, CAPZA2 or CAPZA3 and CAPZB) in a transient or substoichiometric manner which was initially described as WASH complex. Interacts with VCP, PI4K2A.

It is found in the cytoplasm. The protein localises to the cytosol. Its subcellular location is the endoplasmic reticulum. The protein resides in the early endosome. Functionally, acts as a component of the WASH core complex that functions as a nucleation-promoting factor (NPF) at the surface of endosomes, where it recruits and activates the Arp2/3 complex to induce actin polymerization, playing a key role in the fission of tubules that serve as transport intermediates during endosome sorting. May be involved in axonal outgrowth. Involved in cellular localization of ADRB2. Involved in cellular trafficking of BLOC-1 complex cargos such as ATP7A and VAMP7. Involved in cytokinesis and following polar body extrusion during oocyte meiotic maturation. This is WASH complex subunit 5 from Mus musculus (Mouse).